We begin with the raw amino-acid sequence, 147 residues long: Phospholipase A2 inhibitor subunit A (147 aa).

The C-type lectin domain occupies 62 to 143; that stretch reads EICRQAGGRI…DDNLLVVCEF (82 aa). Disulfide bonds link C64–C141 and C119–C133. N-linked (GlcNAc...) asparagine glycosylation occurs at N103.

The protein belongs to the alpha-type phospholipase A2 inhibitor family. Homotrimer; non-covalently linked. Glycosylated. In terms of tissue distribution, expressed by the liver.

The protein localises to the secreted. Its function is as follows. Inhibits the enzymatic activity of the acidic phospholipase A2 (PLA2). In Gloydius brevicaudus siniticus (Chinese mamushi), this protein is Phospholipase A2 inhibitor subunit A.